Here is a 1253-residue protein sequence, read N- to C-terminus: Pleckstrin homology-like domain family B member 2 (1253 aa).

Residues 1-12 are compositionally biased toward basic and acidic residues; the sequence is MEEHSYIQKELD. 3 disordered regions span residues 1 to 43, 60 to 159, and 187 to 212; these read MEEH…PKKY, LTLS…KSHD, and DAGP…RKMS. The segment covering 29–43 has biased composition (polar residues); sequence NDSQNMMESLSPKKY. Phosphoserine occurs at positions 71 and 73. Over residues 74–96 the composition is skewed to polar residues; the sequence is PLGTSVRSSPSLAKIQGSKQFSY. Residues 126–144 show a composition bias toward basic and acidic residues; it reads ADFDHYTGRDSERALRLSE. Residues Ser157, Ser204, Ser212, Ser242, and Ser245 each carry the phosphoserine modification. The interval 265–286 is disordered; that stretch reads NQLTPLSLPPRNSLGNSKRTKL. Phosphoserine occurs at positions 330, 334, 348, 351, 384, 387, 415, 420, 468, 489, and 501. Position 504 is a phosphothreonine (Thr504). Residue Ser513 is modified to Phosphoserine. Residues 525 to 567 are disordered; the sequence is LSQSSASFFTPRSTRNDELLSDLTRTPPPPSSTFPKASSESSY. Phosphothreonine occurs at positions 550 and 574. Coiled-coil stretches lie at residues 584 to 696 and 722 to 807; these read SQEL…LDNC and FEDL…LCNL. The residue at position 898 (Thr898) is a Phosphothreonine. Positions 1032-1098 form a coiled coil; the sequence is IARIEEMERL…QKLIEKEVKI (67 aa). The PH domain maps to 1143 to 1246; it reads EKTCRGFLIK…WMDVIVTGAE (104 aa).

Interacts with FLNC. Interacts with AMOTL2; interaction may facilitate PHLDB2 localization to the myotube podosome cortex that surrounds the core. Part of a cortical microtubule stabilization complex (CMSC) composed of KANK1, PPFIA1, PPFIBP1, ERC1/ELKS, PHLDB2/LL5beta, CLASPs, KIF21A and possibly additional interactors; within CMSCs KANK1 and PHLDB2/LL5beta appear to be the core components for targeting of microtubule-binding proteins KIF21A and CLASPs, whereas PPFIA1, PPFIBP1 and ERC1/ELKS serve as scaffolds for protein clustering.

The protein resides in the cytoplasm. It localises to the cell cortex. It is found in the membrane. Its subcellular location is the cell projection. The protein localises to the podosome. Seems to be involved in the assembly of the postsynaptic apparatus. May play a role in acetyl-choline receptor (AChR) aggregation in the postsynaptic membrane. The chain is Pleckstrin homology-like domain family B member 2 (PHLDB2) from Homo sapiens (Human).